A 602-amino-acid chain; its full sequence is Proline--tRNA ligase (602 aa).

The protein belongs to the class-II aminoacyl-tRNA synthetase family. ProS type 1 subfamily. Homodimer.

It localises to the cytoplasm. It catalyses the reaction tRNA(Pro) + L-proline + ATP = L-prolyl-tRNA(Pro) + AMP + diphosphate. Functionally, catalyzes the attachment of proline to tRNA(Pro) in a two-step reaction: proline is first activated by ATP to form Pro-AMP and then transferred to the acceptor end of tRNA(Pro). As ProRS can inadvertently accommodate and process non-cognate amino acids such as alanine and cysteine, to avoid such errors it has two additional distinct editing activities against alanine. One activity is designated as 'pretransfer' editing and involves the tRNA(Pro)-independent hydrolysis of activated Ala-AMP. The other activity is designated 'posttransfer' editing and involves deacylation of mischarged Ala-tRNA(Pro). The misacylated Cys-tRNA(Pro) is not edited by ProRS. This chain is Proline--tRNA ligase, found in Thermosynechococcus vestitus (strain NIES-2133 / IAM M-273 / BP-1).